The following is a 104-amino-acid chain: MSKVIHVTSNEELDKYLQHQRVVVDFSAEWCGPCRAIAPVFDKLSNEFTTFTFVHVDIDKVNTHPIVKEIRSVPTFYFYVNGAKVSEFSGANEATLRSTLEANI.

Residues 2 to 104 (SKVIHVTSNE…TLRSTLEANI (103 aa)) form the Thioredoxin domain. Residues Cys-31 and Cys-34 each act as nucleophile in the active site. Residues Cys-31 and Cys-34 are joined by a disulfide bond.

It belongs to the thioredoxin family.

Participates in various redox reactions through the reversible oxidation of its active center dithiol to a disulfide and catalyzes dithiol-disulfide exchange reactions. In Dictyostelium discoideum (Social amoeba), this protein is Thioredoxin-3 (trxC).